Reading from the N-terminus, the 431-residue chain is Protein EARLY STARVATION 1, chloroplastic (431 aa).

A chloroplast-targeting transit peptide spans 1–19; it reads MAACSRGLVARPFDLTARG. Disordered stretches follow at residues 65–126 and 403–431; these read GNKP…DTGI and GVYP…SPLE. The span at 415-431 shows a compositional bias: pro residues; the sequence is PAPPSDDPPGMPPSPLE.

This sequence belongs to the ESV1 family.

The protein resides in the plastid. The protein localises to the chloroplast stroma. Functionally, binds preferentially to highly ordered alpha-glucans, such as starch and crystalline maltodextrins. Involved in the organization of the starch granule matrix, thus influencing starch turnover by modulating the accessibility of starch polymers to modifying and degrading enzymes. Required for the control of starch degradation in leaves and starch distribution in nonphotosynthetic parts. Promotes gravitropic responses, negative in shoots but positive in roots, by facilitating starch granules (statoliths) formation in hypocotyls and roots columella. Facilitates tight packing of starch granules in grains. The chain is Protein EARLY STARVATION 1, chloroplastic from Oryza sativa subsp. indica (Rice).